Consider the following 97-residue polypeptide: uncharacterized protein (97 aa).

The signal sequence occupies residues 1-16 (MKQTVLLLFTALFLSG). The N-palmitoyl cysteine moiety is linked to residue Cys17. Residue Cys17 is the site of S-diacylglycerol cysteine attachment.

It is found in the cell membrane. This is an uncharacterized protein from Bacillus subtilis (strain 168).